The sequence spans 560 residues: Hydroxyisourate hydrolase (560 aa).

Residues 1–31 form the signal peptide; sequence MMEPPQTRLMINVFIVSFLALLVNLVVGVLG. Topologically, residues 32 to 517 are peroxisomal; the sequence is ADNYSRDDFP…LEQDPITCSK (486 aa). A glycan (N-linked (GlcNAc...) asparagine) is linked at Asn34. A beta-D-glucoside contacts are provided by residues Gln54 and 198-199; that span reads NE. Catalysis depends on Glu199, which acts as the Proton donor. The cysteines at positions 218 and 223 are disulfide-linked. Asn226 and Asn231 each carry an N-linked (GlcNAc...) asparagine glycan. Tyr343 is a binding site for a beta-D-glucoside. Residue Asn347 is glycosylated (N-linked (GlcNAc...) asparagine). Glu408 contributes to the a beta-D-glucoside binding site. Glu408 (nucleophile) is an active-site residue. N-linked (GlcNAc...) asparagine glycosylation is present at Asn416. Phe467 serves as a coordination point for a beta-D-glucoside. Asn489 carries N-linked (GlcNAc...) asparagine glycosylation. A helical membrane pass occupies residues 518–538; sequence SPIIFSKISKWVLASLLFLIQ. The Cytoplasmic portion of the chain corresponds to 539 to 560; that stretch reads HKIKFMWREPLPGQIPLKLVMF.

The protein belongs to the glycosyl hydrolase 1 family. Monomer. As to expression, highly expressed in uninfected root nodules. Detected in leaves, stems and roots.

It is found in the peroxisome membrane. The enzyme catalyses 5-hydroxyisourate + H2O = 5-hydroxy-2-oxo-4-ureido-2,5-dihydro-1H-imidazole-5-carboxylate + H(+). The protein operates within purine metabolism; urate degradation; (S)-allantoin from urate: step 2/3. Its function is as follows. Involved in the conversion of hydroxyisourate to ureides such as allantoin, the major form of nitrogen transport in legumes. The polypeptide is Hydroxyisourate hydrolase (HIUH) (Glycine max (Soybean)).